The primary structure comprises 378 residues: Homoserine O-acetyltransferase (378 aa).

Positions 54-355 constitute an AB hydrolase-1 domain; that stretch reads NAILVCHALS…NNPAGHDSFL (302 aa). Catalysis depends on S159, which acts as the Nucleophile. Residue R228 coordinates substrate. Residues D318 and H351 contribute to the active site. D352 is a binding site for substrate.

This sequence belongs to the AB hydrolase superfamily. MetX family. As to quaternary structure, homodimer.

It is found in the cytoplasm. It carries out the reaction L-homoserine + acetyl-CoA = O-acetyl-L-homoserine + CoA. It functions in the pathway amino-acid biosynthesis; L-methionine biosynthesis via de novo pathway; O-acetyl-L-homoserine from L-homoserine: step 1/1. Its function is as follows. Transfers an acetyl group from acetyl-CoA to L-homoserine, forming acetyl-L-homoserine. The polypeptide is Homoserine O-acetyltransferase (Leptospira biflexa serovar Patoc (strain Patoc 1 / Ames)).